The sequence spans 325 residues: Beta-ketoacyl-[acyl-carrier-protein] synthase III (325 aa).

Residues cysteine 113 and histidine 250 contribute to the active site. The interval 251–255 (QANIR) is ACP-binding. The active site involves asparagine 280.

Belongs to the thiolase-like superfamily. FabH family. Homodimer.

The protein localises to the cytoplasm. The enzyme catalyses malonyl-[ACP] + acetyl-CoA + H(+) = 3-oxobutanoyl-[ACP] + CO2 + CoA. It functions in the pathway lipid metabolism; fatty acid biosynthesis. Catalyzes the condensation reaction of fatty acid synthesis by the addition to an acyl acceptor of two carbons from malonyl-ACP. Catalyzes the first condensation reaction which initiates fatty acid synthesis and may therefore play a role in governing the total rate of fatty acid production. Possesses both acetoacetyl-ACP synthase and acetyl transacylase activities. Its substrate specificity determines the biosynthesis of branched-chain and/or straight-chain of fatty acids. The chain is Beta-ketoacyl-[acyl-carrier-protein] synthase III from Streptococcus suis (strain 98HAH33).